The chain runs to 262 residues: 14-3-3-like protein B (262 aa).

The protein belongs to the 14-3-3 family.

This is 14-3-3-like protein B from Hordeum vulgare (Barley).